A 337-amino-acid polypeptide reads, in one-letter code: Heat-inducible transcription repressor HrcA (337 aa).

It belongs to the HrcA family.

Functionally, negative regulator of class I heat shock genes (grpE-dnaK-dnaJ and groELS operons). Prevents heat-shock induction of these operons. The protein is Heat-inducible transcription repressor HrcA of Kocuria rhizophila (strain ATCC 9341 / DSM 348 / NBRC 103217 / DC2201).